We begin with the raw amino-acid sequence, 192 residues long: uncharacterized protein (192 aa).

The 132-residue stretch at 29 to 160 folds into the Nudix hydrolase domain; it reads QRQAAVLIPV…PLDVYRRGNS (132 aa). The Nudix box signature appears at 67-89; it reads GAVDSTDASLIAAALREAQEEVA. Glu83 and Glu87 together coordinate Mg(2+).

Belongs to the Nudix hydrolase family. PCD1 subfamily. Mn(2+) serves as cofactor. It depends on Mg(2+) as a cofactor.

Functionally, probably mediates the hydrolysis of some nucleoside diphosphate derivatives. This is an uncharacterized protein from Salmonella agona (strain SL483).